The primary structure comprises 318 residues: Methionyl-tRNA formyltransferase (318 aa).

A (6S)-5,6,7,8-tetrahydrofolate-binding site is contributed by 112–115 (SILP).

It belongs to the Fmt family.

It carries out the reaction L-methionyl-tRNA(fMet) + (6R)-10-formyltetrahydrofolate = N-formyl-L-methionyl-tRNA(fMet) + (6S)-5,6,7,8-tetrahydrofolate + H(+). In terms of biological role, attaches a formyl group to the free amino group of methionyl-tRNA(fMet). The formyl group appears to play a dual role in the initiator identity of N-formylmethionyl-tRNA by promoting its recognition by IF2 and preventing the misappropriation of this tRNA by the elongation apparatus. This Haemophilus influenzae (strain PittEE) protein is Methionyl-tRNA formyltransferase.